A 115-amino-acid chain; its full sequence is Large ribosomal subunit protein bL19 (115 aa).

The protein belongs to the bacterial ribosomal protein bL19 family.

In terms of biological role, this protein is located at the 30S-50S ribosomal subunit interface and may play a role in the structure and function of the aminoacyl-tRNA binding site. This Francisella tularensis subsp. tularensis (strain FSC 198) protein is Large ribosomal subunit protein bL19.